Reading from the N-terminus, the 175-residue chain is Peptide methionine sulfoxide reductase MsrA (175 aa).

Residue cysteine 10 is part of the active site.

This sequence belongs to the MsrA Met sulfoxide reductase family.

The catalysed reaction is L-methionyl-[protein] + [thioredoxin]-disulfide + H2O = L-methionyl-(S)-S-oxide-[protein] + [thioredoxin]-dithiol. The enzyme catalyses [thioredoxin]-disulfide + L-methionine + H2O = L-methionine (S)-S-oxide + [thioredoxin]-dithiol. In terms of biological role, has an important function as a repair enzyme for proteins that have been inactivated by oxidation. Catalyzes the reversible oxidation-reduction of methionine sulfoxide in proteins to methionine. In Clavibacter sepedonicus (Clavibacter michiganensis subsp. sepedonicus), this protein is Peptide methionine sulfoxide reductase MsrA.